Reading from the N-terminus, the 357-residue chain is Putative ABC transporter ATP-binding protein MG303 (357 aa).

The region spanning 72-312 (LFFNNISVFV…TSWLMQYGIT (241 aa)) is the ABC transporter domain. 107–114 (GESGSGKT) contacts ATP.

This sequence belongs to the ABC transporter superfamily.

This Mycoplasma genitalium (strain ATCC 33530 / DSM 19775 / NCTC 10195 / G37) (Mycoplasmoides genitalium) protein is Putative ABC transporter ATP-binding protein MG303.